A 440-amino-acid chain; its full sequence is 3-phosphoshikimate 1-carboxyvinyltransferase (440 aa).

Residues Lys-19, Ser-20, and Arg-24 each contribute to the 3-phosphoshikimate site. Lys-19 contributes to the phosphoenolpyruvate binding site. Gly-92 and Arg-121 together coordinate phosphoenolpyruvate. Residues Ser-166, Gln-168, Asp-315, and Lys-342 each contribute to the 3-phosphoshikimate site. Gln-168 contacts phosphoenolpyruvate. Catalysis depends on Asp-315, which acts as the Proton acceptor. Arg-346 and Arg-399 together coordinate phosphoenolpyruvate.

It belongs to the EPSP synthase family. Monomer.

The protein resides in the cytoplasm. The enzyme catalyses 3-phosphoshikimate + phosphoenolpyruvate = 5-O-(1-carboxyvinyl)-3-phosphoshikimate + phosphate. It participates in metabolic intermediate biosynthesis; chorismate biosynthesis; chorismate from D-erythrose 4-phosphate and phosphoenolpyruvate: step 6/7. Its function is as follows. Catalyzes the transfer of the enolpyruvyl moiety of phosphoenolpyruvate (PEP) to the 5-hydroxyl of shikimate-3-phosphate (S3P) to produce enolpyruvyl shikimate-3-phosphate and inorganic phosphate. This chain is 3-phosphoshikimate 1-carboxyvinyltransferase, found in Leptospira interrogans serogroup Icterohaemorrhagiae serovar Lai (strain 56601).